A 188-amino-acid chain; its full sequence is dCTP deaminase (188 aa).

Residues 111 to 116 (KSTYAR), 135 to 137 (TLE), glutamine 156, tyrosine 170, and glutamine 180 contribute to the dCTP site. Catalysis depends on glutamate 137, which acts as the Proton donor/acceptor.

This sequence belongs to the dCTP deaminase family. Homotrimer.

It carries out the reaction dCTP + H2O + H(+) = dUTP + NH4(+). Its pathway is pyrimidine metabolism; dUMP biosynthesis; dUMP from dCTP (dUTP route): step 1/2. Functionally, catalyzes the deamination of dCTP to dUTP. This is dCTP deaminase from Pseudomonas aeruginosa (strain UCBPP-PA14).